The following is a 306-amino-acid chain: Acetyl-coenzyme A carboxylase carboxyl transferase subunit beta (306 aa).

Residues 25 to 294 enclose the CoA carboxyltransferase N-terminal domain; sequence LWIKDPTSGE…AVNPSNPSPT (270 aa). A disordered region spans residues 286-306; it reads VNPSNPSPTDSQPPLSKAEAA. Polar residues predominate over residues 287–299; it reads NPSNPSPTDSQPP.

It belongs to the AccD/PCCB family. Acetyl-CoA carboxylase is a heterohexamer composed of biotin carboxyl carrier protein (AccB), biotin carboxylase (AccC) and two subunits each of ACCase subunit alpha (AccA) and ACCase subunit beta (AccD).

It localises to the cytoplasm. It carries out the reaction N(6)-carboxybiotinyl-L-lysyl-[protein] + acetyl-CoA = N(6)-biotinyl-L-lysyl-[protein] + malonyl-CoA. The protein operates within lipid metabolism; malonyl-CoA biosynthesis; malonyl-CoA from acetyl-CoA: step 1/1. Its function is as follows. Component of the acetyl coenzyme A carboxylase (ACC) complex. Biotin carboxylase (BC) catalyzes the carboxylation of biotin on its carrier protein (BCCP) and then the CO(2) group is transferred by the transcarboxylase to acetyl-CoA to form malonyl-CoA. In Bartonella quintana (strain Toulouse) (Rochalimaea quintana), this protein is Acetyl-coenzyme A carboxylase carboxyl transferase subunit beta.